Reading from the N-terminus, the 315-residue chain is 4-diphosphocytidyl-2-C-methyl-D-erythritol kinase (315 aa).

The active site involves Lys26. Position 111-121 (111-121 (PLAGGLAGGSA)) interacts with ATP. The active site involves Asp153.

The protein belongs to the GHMP kinase family. IspE subfamily.

The catalysed reaction is 4-CDP-2-C-methyl-D-erythritol + ATP = 4-CDP-2-C-methyl-D-erythritol 2-phosphate + ADP + H(+). Its pathway is isoprenoid biosynthesis; isopentenyl diphosphate biosynthesis via DXP pathway; isopentenyl diphosphate from 1-deoxy-D-xylulose 5-phosphate: step 3/6. Catalyzes the phosphorylation of the position 2 hydroxy group of 4-diphosphocytidyl-2C-methyl-D-erythritol. This chain is 4-diphosphocytidyl-2-C-methyl-D-erythritol kinase, found in Salinispora tropica (strain ATCC BAA-916 / DSM 44818 / JCM 13857 / NBRC 105044 / CNB-440).